A 118-amino-acid polypeptide reads, in one-letter code: Ribonuclease P protein component (118 aa).

The protein belongs to the RnpA family. In terms of assembly, consists of a catalytic RNA component (M1 or rnpB) and a protein subunit.

The catalysed reaction is Endonucleolytic cleavage of RNA, removing 5'-extranucleotides from tRNA precursor.. In terms of biological role, RNaseP catalyzes the removal of the 5'-leader sequence from pre-tRNA to produce the mature 5'-terminus. It can also cleave other RNA substrates such as 4.5S RNA. The protein component plays an auxiliary but essential role in vivo by binding to the 5'-leader sequence and broadening the substrate specificity of the ribozyme. This is Ribonuclease P protein component from Shewanella baltica (strain OS155 / ATCC BAA-1091).